Here is a 460-residue protein sequence, read N- to C-terminus: GTPase Der (460 aa).

EngA-type G domains are found at residues 4 to 174 and 184 to 361; these read PQVA…PRRE and PKIA…AERS. Residues 10-17, 57-61, 126-129, 190-197, 237-241, and 302-305 contribute to the GTP site; these read GRPNVGKS, DTGGL, NKAE, DTAGI, and NKWD. The region spanning 362–446 is the KH-like domain; that stretch reads RRIPTAELNQ…PIELVFRERE (85 aa).

Belongs to the TRAFAC class TrmE-Era-EngA-EngB-Septin-like GTPase superfamily. EngA (Der) GTPase family. Associates with the 50S ribosomal subunit.

Its function is as follows. GTPase that plays an essential role in the late steps of ribosome biogenesis. The polypeptide is GTPase Der (Thermomicrobium roseum (strain ATCC 27502 / DSM 5159 / P-2)).